The chain runs to 599 residues: Chaperone protein DnaK (599 aa).

Thr187 carries the phosphothreonine; by autocatalysis modification. The tract at residues 575–599 (AQQAATENSKDSDTVEAEIVDDKAN) is disordered.

Belongs to the heat shock protein 70 family.

In terms of biological role, acts as a chaperone. In Mycoplasmopsis pulmonis (strain UAB CTIP) (Mycoplasma pulmonis), this protein is Chaperone protein DnaK.